Consider the following 435-residue polypeptide: Prenyltransferase nanD (435 aa).

Glutamate 101 is a substrate binding site. Dimethylallyl diphosphate is bound by residues arginine 114, lysine 202, and tyrosine 204. Tyrosine 206 is a binding site for substrate. 5 residues coordinate dimethylallyl diphosphate: lysine 280, tyrosine 282, tyrosine 364, tyrosine 429, and tyrosine 433.

The protein belongs to the tryptophan dimethylallyltransferase family.

The protein operates within secondary metabolite biosynthesis. Its function is as follows. Prenyltransferase; part of the gene cluster that mediates the biosynthesis of the benzazepine alkaloid nanangelenin A which contains an unprecedented 3,4-dihydro-1-benzazepine-2,5-dione-N-prenyl-N-acetoxy-anthranilamide scaffold. The first step of nanangelenin biosynthesis is catalyzed by the indoleamine 2,3-dioxygenase nanC which produces N-formyl-kynurenine through the catabolism of tryptophan. The two-module NRPS nanA then utilizes anthranilate (Ant) and L-kynurenine (L-Kyn) to assemble the dipeptide product nanangelenin B. The first adenylation domain of nanA (A1) loads anthranilate onto the T1 domain, while A2 loads kynurenine, generated through spontaneous nonenzymatic deformylation of the nanC-supplied N-formyl-kynurenine. The peptide bond formation between the tethered amino acids is catalyzed by the first condensation domain (C1) between anthranilate's carbonyl carbon and kynurenine's aliphatic primary amine. The second C domain (C2) catalyzes the final cyclization event between the aromatic amine of kynurenine and the tethered carbonyl carbon, yielding nanangelenin B. The terminal T3 domain enhances the catalytic efficiency of C2, suggesting the T2-tethered Ant-L-Kyn is transferred to T3 prior to cyclization by C2. Once released from nanA, nanangelenin B is then prenylated by the prenyltransferase nanD to form nanangelenin C. Nanangelenin C is then N-hydroxylated by the FAD-dependent monooxygenase nanF and further acetylated by the acetyltransferase nanB to yield nanangelenin F. Finally, the N-methyltransferase nanE methylates the amide nitrogen of 1-benzazepine to convert nanangelenin F into nanangelenin A. NanE is also able to methylate most of the intermediates of the pathway such as nanangelenin B and nanangelenin C to produce nanangelenin D and nanangelenin E, respectively. This chain is Prenyltransferase nanD, found in Aspergillus nanangensis.